A 37-amino-acid chain; its full sequence is MAWRNPMNTLISLLLLTLIMLAGPAVIALWYFRGRQV.

Residues 10-30 traverse the membrane as a helical segment; sequence LISLLLLTLIMLAGPAVIALW.

It belongs to the Psb30/Ycf12 family. PSII is composed of 1 copy each of membrane proteins PsbA, PsbB, PsbC, PsbD, PsbE, PsbF, PsbH, PsbI, PsbJ, PsbK, PsbL, PsbM, PsbT, PsbX, Psb30/Ycf12, peripheral proteins PsbO, CyanoQ (PsbQ), PsbU, PsbV and a large number of cofactors. It forms dimeric complexes.

It is found in the cell inner membrane. In terms of biological role, a core subunit of photosystem II (PSII), probably helps stabilize the reaction center. This chain is Photosystem II reaction center protein Psb30, found in Gloeobacter violaceus (strain ATCC 29082 / PCC 7421).